We begin with the raw amino-acid sequence, 128 residues long: Modulator protein MzrA (128 aa).

Residues 1-11 lie on the Cytoplasmic side of the membrane; that stretch reads MMVMKRPSLRQ. The helical transmembrane segment at 12-32 threads the bilayer; that stretch reads FSWLLGGSLLLGALFWLWLAV. The Periplasmic portion of the chain corresponds to 33–128; it reads QQQEATLAIR…RLRDAPHRLG (96 aa).

Belongs to the MzrA family. As to quaternary structure, interacts with EnvZ.

The protein localises to the cell inner membrane. Its function is as follows. Modulates the activity of the EnvZ/OmpR two-component regulatory system, probably by directly modulating EnvZ enzymatic activity and increasing stability of phosphorylated OmpR. The polypeptide is Modulator protein MzrA (Klebsiella pneumoniae subsp. pneumoniae (strain ATCC 700721 / MGH 78578)).